A 259-amino-acid polypeptide reads, in one-letter code: Acetylglutamate kinase (259 aa).

Residues 45-46, Arg-67, and Asn-159 contribute to the substrate site; that span reads GG.

Belongs to the acetylglutamate kinase family. ArgB subfamily.

It is found in the cytoplasm. It catalyses the reaction N-acetyl-L-glutamate + ATP = N-acetyl-L-glutamyl 5-phosphate + ADP. It functions in the pathway amino-acid biosynthesis; L-arginine biosynthesis; N(2)-acetyl-L-ornithine from L-glutamate: step 2/4. Catalyzes the ATP-dependent phosphorylation of N-acetyl-L-glutamate. In Aeromonas salmonicida (strain A449), this protein is Acetylglutamate kinase.